The primary structure comprises 835 residues: BCL11 transcription factor A (835 aa).

Over residues 1–12 (MSRRKQGKPQHL) the composition is skewed to basic residues. The segment at 1–41 (MSRRKQGKPQHLSKREFSPEPLEAILTDDEPDHGPLGAPEG) is disordered. Positions 1–210 (MSRRKQGKPQ…SEHGSPLTPR (210 aa)) are required for nuclear body formation and for SUMO1 recruitment. The segment at 45–71 (LLTCGQCQMNFPLGDILIFIEHKRKQC) adopts a C2HC-type zinc-finger fold. Zn(2+) is bound by residues C48, C51, H66, and C71. S86 bears the Phosphoserine mark. A Glycyl lysine isopeptide (Lys-Gly) (interchain with G-Cter in SUMO2) cross-link involves residue K123. I162 carries the post-translational modification Phosphothreonine. Residue K164 forms a Glycyl lysine isopeptide (Lys-Gly) (interchain with G-Cter in SUMO2) linkage. The C2H2-type 1 zinc-finger motif lies at 170-193 (YTCTTCKQPFTSAWFLLQHAQNTH). S205 carries the phosphoserine modification. P214 carries the phosphothreonine modification. R271 bears the Asymmetric dimethylarginine mark. The tract at residues 323 to 376 (AGNTSSPPLSPGRPSPMQRLLQPFQPGSKPPFLATPPLPPLQSAPPPSQPPVKS) is disordered. A phosphoserine mark is found at S332 and S337. The segment covering 355 to 372 (LATPPLPPLQSAPPPSQP) has biased composition (pro residues). C2H2-type zinc fingers lie at residues 377–399 (KSCEFCGKTFKFQSNLVVHRRSH) and 405–429 (YKCNLCDHACTQASKLKRHMKTHMH). Basic residues predominate over residues 421 to 430 (KRHMKTHMHK). Disordered stretches follow at residues 421–458 (KRHMKTHMHKSSPMTVKSDDGLSTASSPEPGTSDLVGS), 471–512 (KSEN…ERVD), and 572–619 (RSHL…GLSK). Residues 441-450 (GLSTASSPEP) show a composition bias toward polar residues. 2 positions are modified to phosphoserine: S446 and S447. The span at 482–506 (NGDEEEEEDDEEEEEEEEEEEEELT) shows a compositional bias: acidic residues. Residues 574–584 (HLAEAEGHRDT) show a composition bias toward basic and acidic residues. Position 608 is a phosphoserine (S608). K620 is covalently cross-linked (Glycyl lysine isopeptide (Lys-Gly) (interchain with G-Cter in SUMO2)). Phosphoserine occurs at positions 625 and 630. A Glycyl lysine isopeptide (Lys-Gly) (interchain with G-Cter in SUMO1) cross-link involves residue K634. The segment covering 682 to 696 (SPFASSSEHSSENGS) has biased composition (low complexity). T701 is modified (phosphothreonine). The span at 706-720 (LDGGISGRSGTGSGG) shows a compositional bias: gly residues. A DNA-binding region spans residues 737–835 (EGRRSDTCEY…RVLNNDIKTE (99 aa)). The C2H2-type 4 zinc finger occupies 742-764 (DTCEYCGKVFKNCSNLTVHRRSH). Zn(2+) is bound by residues C744, C747, H760, and H764. Polar residues predominate over residues 764–773 (HTGERPYKCE). Residues 765 to 769 (TGERP) form a disordered region. The C2H2-type 5 zinc finger occupies 770–792 (YKCELCNYACAQSSKLTRHMKTH). 4 residues coordinate Zn(2+): C772, C775, H788, and H792. The disordered stretch occupies residues 793 to 799 (GQVGKDV). The segment at 800-823 (YKCEICKMPFSVYSTLEKHMKKWH) adopts a C2H2-type 6 zinc-finger fold. Zn(2+)-binding residues include C802, C805, H818, and H823.

As to quaternary structure, homotetrameric; self-associates via C2HC-type zinc finger domain. Interacts with MTA2, a component of the nucleosome remodeling and deacetylase (NuRD) repressor complex. Interacts with NR2F1, PIAS3, NR2F2 and NR2F6. Interacts with TBR1. Sumoylated with SUMO1. As to expression, isoforms are expressed in a tissue-specific fashion. Isoforms 1, isoform 2, and isoform 3 are expressed at similar levels in testis, kidney and spleen. Isoform 1 is expressed in the stomach, and isoform 2 is expressed exclusively in the lung. Overexpression following proviral integration in hematopoietic cells results in the generation of myeloid leukemia.

The protein localises to the cytoplasm. It is found in the nucleus. Its function is as follows. Transcription factor. Associated with the BAF SWI/SNF chromatin remodeling complex. Binds to the 5'-TGACCA-3' sequence motif in regulatory regions of target genes. Involved in brain development. May play a role in hematopoiesis. Essential factor in lymphopoiesis, required for B-cell formation in fetal liver. May function as a modulator of the transcriptional repression activity of NR2F2. This chain is BCL11 transcription factor A (Bcl11a), found in Mus musculus (Mouse).